The following is a 145-amino-acid chain: D-aminoacyl-tRNA deacylase (145 aa).

The Gly-cisPro motif, important for rejection of L-amino acids motif lies at G137 to P138.

This sequence belongs to the DTD family. Homodimer.

Its subcellular location is the cytoplasm. It catalyses the reaction glycyl-tRNA(Ala) + H2O = tRNA(Ala) + glycine + H(+). The enzyme catalyses a D-aminoacyl-tRNA + H2O = a tRNA + a D-alpha-amino acid + H(+). Its function is as follows. An aminoacyl-tRNA editing enzyme that deacylates mischarged D-aminoacyl-tRNAs. Also deacylates mischarged glycyl-tRNA(Ala), protecting cells against glycine mischarging by AlaRS. Acts via tRNA-based rather than protein-based catalysis; rejects L-amino acids rather than detecting D-amino acids in the active site. By recycling D-aminoacyl-tRNA to D-amino acids and free tRNA molecules, this enzyme counteracts the toxicity associated with the formation of D-aminoacyl-tRNA entities in vivo and helps enforce protein L-homochirality. In Lactobacillus delbrueckii subsp. bulgaricus (strain ATCC BAA-365 / Lb-18), this protein is D-aminoacyl-tRNA deacylase.